A 426-amino-acid chain; its full sequence is MAIAHLATEYVFSDFLLKEPTEPKFKGLRLELAVDKMVTCIAVGLPLLLISLAFAQEISIGTQISCFSPSSFSWRQAAFVDSYCWAAVQQKNSLQSESGNLPLWLHKFFPYILLLFAILLYLPALFWRFAAAPHLCSDLKFIMEELDKVYNRAIKAAKSARDLDLRDGPGPPGVTENVGQSLWEISESHFKYPIVEQYLKTKKNSSHLIMKYISCRLVTFAVVLLACIYLSYYFSLSSLSDEFLCSIKSGVLRNDSTIPDSFQCKLIAVGIFQLLSLINLLVYALLVPVVIYTLFVPFRQKTDVLKVYEILPTFDVLHFKSEGYNDLSLYNLFLEENISELKSYKCLKVLENIKSNGQGIDPMLLLTNLGMIKMDVIDGKVPMSLQTKGEDQGSQRMDFKDLDLSSETAANNGEKNSRQRLLNSSC.

The Cytoplasmic segment spans residues 1 to 40; the sequence is MAIAHLATEYVFSDFLLKEPTEPKFKGLRLELAVDKMVTC. An S-nitrosocysteine modification is found at C40. Residues 41–61 form a helical membrane-spanning segment; the sequence is IAVGLPLLLISLAFAQEISIG. Residues 62–106 are Extracellular-facing; the sequence is TQISCFSPSSFSWRQAAFVDSYCWAAVQQKNSLQSESGNLPLWLH. 2 cysteine pairs are disulfide-bonded: C66-C264 and C84-C245. The helical transmembrane segment at 107–127 threads the bilayer; the sequence is KFFPYILLLFAILLYLPALFW. The Cytoplasmic segment spans residues 128–216; that stretch reads RFAAAPHLCS…HLIMKYISCR (89 aa). At Y198 the chain carries Phosphotyrosine. A helical transmembrane segment spans residues 217-237; the sequence is LVTFAVVLLACIYLSYYFSLS. Residues 238–277 lie on the Extracellular side of the membrane; it reads SLSDEFLCSIKSGVLRNDSTIPDSFQCKLIAVGIFQLLSL. N254 is a glycosylation site (N-linked (GlcNAc...) asparagine). The helical transmembrane segment at 278–298 threads the bilayer; the sequence is INLLVYALLVPVVIYTLFVPF. The Cytoplasmic segment spans residues 299-426; sequence RQKTDVLKVY…SRQRLLNSSC (128 aa). Residue C346 is modified to S-nitrosocysteine. Residues 407–426 form a disordered region; the sequence is ETAANNGEKNSRQRLLNSSC.

The protein belongs to the pannexin family. Homoheptameric. In terms of processing, S-nitrosylation inhibits channel currents and ATP release. Post-translationally, N-glycosylation plays a role in cell surface targeting. Glycosylation at its extracellular surface makes unlikely that two oligomers could dock to form an intercellular channel such as in gap junctions. Exists in three glycosylation states: non-glycosylated (GLY0), high-mannose glycosylated (GLY1), and fully mature glycosylated (GLY2). Cleaved by CASP3 and CASP7 during apoptosis. Cleavage opens the channel for the release of metabolites and induces plasma membrane permeability during apoptosis. In terms of processing, phosphorylated at Tyr-198 by SRC. Phosphorylation activates ATP release. Constitutively phosphorylated in vascular smooth muscle cells. Expressed in the eye, thyroid, prostate, kidney and liver. Abundantly expressed in the CNS, including hippocampus, olfactory bulb, cortex, cerebellum and white matter.

The protein localises to the cell membrane. It localises to the endoplasmic reticulum membrane. It carries out the reaction Ca(2+)(in) = Ca(2+)(out). The catalysed reaction is ATP(in) = ATP(out). The enzyme catalyses K(+)(in) = K(+)(out). It catalyses the reaction chloride(in) = chloride(out). It carries out the reaction iodide(out) = iodide(in). The catalysed reaction is Na(+)(in) = Na(+)(out). The enzyme catalyses nitrate(in) = nitrate(out). It catalyses the reaction L-aspartate(out) = L-aspartate(in). It carries out the reaction L-glutamate(out) = L-glutamate(in). The catalysed reaction is D-gluconate(in) = D-gluconate(out). The enzyme catalyses spermidine(in) = spermidine(out). Its function is as follows. Ion channel involved in a variety of physiological functions such as blood pressure regulation, apoptotic cell clearance and oogenesis. Forms anion-selective channels with relatively low conductance and an order of permeabilities: nitrate&gt;iodide&gt;chlroride&gt;&gt;aspartate=glutamate=gluconate. Can release ATP upon activation through phosphorylation or cleavage at C-terminus. May play a role as a Ca(2+)-leak channel to regulate ER Ca(2+) homeostasis. In terms of biological role, during apoptosis, the C terminal tail is cleaved by caspases, which opens the main pore acting as a large-pore ATP efflux channel with a broad distribution, which allows the regulated release of molecules and ions smaller than 1 kDa, such as nucleotides ATP and UTP, and selective plasma membrane permeability to attract phagocytes that engulf the dying cells. In Rattus norvegicus (Rat), this protein is Pannexin-1 (Panx1).